A 350-amino-acid chain; its full sequence is Inner membrane protein YhiM (350 aa).

The Cytoplasmic portion of the chain corresponds to 1–2; that stretch reads MN. Residues 3–23 traverse the membrane as a helical segment; it reads IYIGWLFKLIPLIMGLICIAL. Residues 24 to 41 are Periplasmic-facing; that stretch reads GGFVLESSGQSEYFVAGH. The helical transmembrane segment at 42–62 threads the bilayer; that stretch reads VLISLAAICLALFTTAFIIIS. The Cytoplasmic segment spans residues 63–74; it reads QLTRGVNTFYNT. Residues 75–95 form a helical membrane-spanning segment; the sequence is LFPIIGYAGSIITMIWGWALL. Topologically, residues 96-104 are periplasmic; sequence AGNDVMADE. The helical transmembrane segment at 105–125 threads the bilayer; sequence FVAGHVIFGVGMIAACVSTVA. The Cytoplasmic segment spans residues 126-157; that stretch reads ASSGHFLLIPKNAAGSKSDGTPVQAYSSLIGN. The chain crosses the membrane as a helical span at residues 158–178; it reads CLIAVPVLLTLLGFIWSITLL. The Periplasmic portion of the chain corresponds to 179 to 190; sequence RSADITPHYVAG. A helical transmembrane segment spans residues 191–211; sequence HVLLGLTAICACLIGLVATIV. The Cytoplasmic portion of the chain corresponds to 212-225; sequence HQTRNTFSTKEHWL. The helical transmembrane segment at 226 to 246 threads the bilayer; it reads WCYWVIFLGSITVLQGIYVLV. Topologically, residues 247-257 are periplasmic; it reads SSDASARLAPG. The chain crosses the membrane as a helical span at residues 258-278; the sequence is IILICLGMICYSIFSKVWLLA. The Cytoplasmic segment spans residues 279–290; sequence LVWRRTCSLANR. A helical membrane pass occupies residues 291–311; that stretch reads IPMIPVFTCLFCLFLASFLAE. The Periplasmic portion of the chain corresponds to 312-324; it reads MAQTDMGYFIPSR. A helical transmembrane segment spans residues 325 to 345; that stretch reads VLVGLGAVCFTLFSIVSILEA. Residues 346-350 are Cytoplasmic-facing; that stretch reads GSAKK.

The protein localises to the cell inner membrane. The sequence is that of Inner membrane protein YhiM (yhiM) from Escherichia coli (strain K12).